The following is a 218-amino-acid chain: MSTLNYLLIFILAYLIGSFPTGVLVGKIFFHEDIRNFGSGNIGTTNSFRVMGPVAGSAVLVIDVLKGTLATDLPLIFHLKGPKYLLLIAGACAILGHTFSIFLKFKGGKAVATSAGVFLGYNLKFFGLCALVFLPMLFITSYVSLSSLVSIVIIFICSFWFHDIFLTIITGIMMILLFVRHRSNIKRLINHEENIVPFGLWYWYKKSHGLLKKNAKNK.

The next 5 helical transmembrane spans lie at 6-26, 50-70, 85-105, 115-135, and 159-179; these read YLLI…VLVG, VMGP…GTLA, LLLI…FLKF, AGVF…VFLP, and FWFH…LLFV.

The protein belongs to the PlsY family. As to quaternary structure, probably interacts with PlsX.

It is found in the cell membrane. The enzyme catalyses an acyl phosphate + sn-glycerol 3-phosphate = a 1-acyl-sn-glycero-3-phosphate + phosphate. The protein operates within lipid metabolism; phospholipid metabolism. In terms of biological role, catalyzes the transfer of an acyl group from acyl-phosphate (acyl-PO(4)) to glycerol-3-phosphate (G3P) to form lysophosphatidic acid (LPA). This enzyme utilizes acyl-phosphate as fatty acyl donor, but not acyl-CoA or acyl-ACP. The sequence is that of Glycerol-3-phosphate acyltransferase 2 from Lactobacillus johnsonii (strain CNCM I-12250 / La1 / NCC 533).